A 301-amino-acid chain; its full sequence is Sulfate adenylyltransferase subunit 2 (301 aa).

Residues 282–301 (RLIDRDEAGSMEKKKREGYF) form a disordered region.

It belongs to the PAPS reductase family. CysD subfamily. As to quaternary structure, heterodimer composed of CysD, the smaller subunit, and CysN.

The enzyme catalyses sulfate + ATP + H(+) = adenosine 5'-phosphosulfate + diphosphate. It functions in the pathway sulfur metabolism; hydrogen sulfide biosynthesis; sulfite from sulfate: step 1/3. In terms of biological role, with CysN forms the ATP sulfurylase (ATPS) that catalyzes the adenylation of sulfate producing adenosine 5'-phosphosulfate (APS) and diphosphate, the first enzymatic step in sulfur assimilation pathway. APS synthesis involves the formation of a high-energy phosphoric-sulfuric acid anhydride bond driven by GTP hydrolysis by CysN coupled to ATP hydrolysis by CysD. This is Sulfate adenylyltransferase subunit 2 from Chelativorans sp. (strain BNC1).